We begin with the raw amino-acid sequence, 317 residues long: tRNA pseudouridine synthase B (317 aa).

The active-site Nucleophile is the aspartate 47.

Belongs to the pseudouridine synthase TruB family. Type 1 subfamily.

The enzyme catalyses uridine(55) in tRNA = pseudouridine(55) in tRNA. Functionally, responsible for synthesis of pseudouridine from uracil-55 in the psi GC loop of transfer RNAs. This chain is tRNA pseudouridine synthase B, found in Shewanella sp. (strain MR-4).